The sequence spans 160 residues: 2-C-methyl-D-erythritol 2,4-cyclodiphosphate synthase (160 aa).

Positions 11 and 13 each coordinate a divalent metal cation. Residues 11–13 and 37–38 each bind 4-CDP-2-C-methyl-D-erythritol 2-phosphate; these read DIH and HS. H45 lines the a divalent metal cation pocket. 4-CDP-2-C-methyl-D-erythritol 2-phosphate is bound by residues 59–61, 135–138, and R145; these read DIG and TTNE.

The protein belongs to the IspF family. As to quaternary structure, homotrimer. A divalent metal cation serves as cofactor.

It carries out the reaction 4-CDP-2-C-methyl-D-erythritol 2-phosphate = 2-C-methyl-D-erythritol 2,4-cyclic diphosphate + CMP. It participates in isoprenoid biosynthesis; isopentenyl diphosphate biosynthesis via DXP pathway; isopentenyl diphosphate from 1-deoxy-D-xylulose 5-phosphate: step 4/6. Its function is as follows. Involved in the biosynthesis of isopentenyl diphosphate (IPP) and dimethylallyl diphosphate (DMAPP), two major building blocks of isoprenoid compounds. Catalyzes the conversion of 4-diphosphocytidyl-2-C-methyl-D-erythritol 2-phosphate (CDP-ME2P) to 2-C-methyl-D-erythritol 2,4-cyclodiphosphate (ME-CPP) with a corresponding release of cytidine 5-monophosphate (CMP). The chain is 2-C-methyl-D-erythritol 2,4-cyclodiphosphate synthase from Nostoc punctiforme (strain ATCC 29133 / PCC 73102).